The sequence spans 89 residues: Cell division topological specificity factor (89 aa).

It belongs to the MinE family.

In terms of biological role, prevents the cell division inhibition by proteins MinC and MinD at internal division sites while permitting inhibition at polar sites. This ensures cell division at the proper site by restricting the formation of a division septum at the midpoint of the long axis of the cell. The sequence is that of Cell division topological specificity factor from Clostridium beijerinckii (strain ATCC 51743 / NCIMB 8052) (Clostridium acetobutylicum).